The following is a 296-amino-acid chain: Phosphatidylglycerol--prolipoprotein diacylglyceryl transferase (296 aa).

The next 3 helical transmembrane spans lie at 17–37, 59–79, and 97–117; these read LAVR…IVVG, MMFY…VLFY, and GGMS…LFAW. An a 1,2-diacyl-sn-glycero-3-phospho-(1'-sn-glycerol)-binding site is contributed by R142. 2 consecutive transmembrane segments (helical) span residues 230–250 and 265–285; these read MGAI…TVEF and LSMG…MMIW.

This sequence belongs to the Lgt family.

The protein resides in the cell inner membrane. The catalysed reaction is L-cysteinyl-[prolipoprotein] + a 1,2-diacyl-sn-glycero-3-phospho-(1'-sn-glycerol) = an S-1,2-diacyl-sn-glyceryl-L-cysteinyl-[prolipoprotein] + sn-glycerol 1-phosphate + H(+). It participates in protein modification; lipoprotein biosynthesis (diacylglyceryl transfer). In terms of biological role, catalyzes the transfer of the diacylglyceryl group from phosphatidylglycerol to the sulfhydryl group of the N-terminal cysteine of a prolipoprotein, the first step in the formation of mature lipoproteins. The sequence is that of Phosphatidylglycerol--prolipoprotein diacylglyceryl transferase from Burkholderia mallei (strain NCTC 10247).